Here is a 109-residue protein sequence, read N- to C-terminus: MLEPFQILSICSFILSALHFMAWTIGHLNQIKRGVNLKIRIRNPNKETINREVSILRHSYQKEIQAKETMKEVLSDNMEILSDHIVIEGLSAEEIIKMGETVLEVEELQ.

At 1-4 (MLEP) the chain is on the virion surface side. Residues 5–27 (FQILSICSFILSALHFMAWTIGH) form a helical; Signal-anchor for type III membrane protein membrane-spanning segment. The Intravirion segment spans residues 28–109 (LNQIKRGVNL…ETVLEVEELQ (82 aa)). The stretch at 58 to 83 (HSYQKEIQAKETMKEVLSDNMEILSD) forms a coiled coil.

In terms of assembly, homotetramer. In terms of processing, phosphorylated by host.

Its subcellular location is the virion membrane. The protein resides in the host cell membrane. Forms presumably a highly low-pH gated proton-selective channel. Trp-23 may function as a minimalistic gate that opens and closes the pore. When the environmental pH is lower than a threshold, the BM2 channel would be activated and selectively transport protons across the membrane from the extracellular side to the cytoplasmic side. Crucial for the uncoating process. When the virion is internalized into the endosome, the channel acidifies the virion's interior, promoting the dissociation of matrix protein 1 (M1) from the ribonucleoprotein (RNP) thus allowing the transport of the RNP from the virion into the cell's nucleus. Also plays a role in viral protein secretory pathway. Elevates the intravesicular pH of normally acidic compartments, such as trans-Golgi network, preventing newly formed hemagglutinin from premature switching to the fusion-active conformation. Plays a crucial role in virion assembly. Expressed in the late phase of the infection. The sequence is that of Matrix protein 2 (M) from Influenza B virus (strain B/Ann Arbor/1/1966 [cold-adapted]).